The sequence spans 383 residues: Ribosomal RNA large subunit methyltransferase G (383 aa).

The protein belongs to the methyltransferase superfamily. RlmG family.

The protein resides in the cytoplasm. The enzyme catalyses guanosine(1835) in 23S rRNA + S-adenosyl-L-methionine = N(2)-methylguanosine(1835) in 23S rRNA + S-adenosyl-L-homocysteine + H(+). Specifically methylates the guanine in position 1835 (m2G1835) of 23S rRNA. The chain is Ribosomal RNA large subunit methyltransferase G from Vibrio atlanticus (strain LGP32) (Vibrio splendidus (strain Mel32)).